The primary structure comprises 256 residues: Imidazole glycerol phosphate synthase subunit HisF (256 aa).

Residues D12 and D131 contribute to the active site.

This sequence belongs to the HisA/HisF family. Heterodimer of HisH and HisF.

The protein localises to the cytoplasm. It catalyses the reaction 5-[(5-phospho-1-deoxy-D-ribulos-1-ylimino)methylamino]-1-(5-phospho-beta-D-ribosyl)imidazole-4-carboxamide + L-glutamine = D-erythro-1-(imidazol-4-yl)glycerol 3-phosphate + 5-amino-1-(5-phospho-beta-D-ribosyl)imidazole-4-carboxamide + L-glutamate + H(+). It participates in amino-acid biosynthesis; L-histidine biosynthesis; L-histidine from 5-phospho-alpha-D-ribose 1-diphosphate: step 5/9. Functionally, IGPS catalyzes the conversion of PRFAR and glutamine to IGP, AICAR and glutamate. The HisF subunit catalyzes the cyclization activity that produces IGP and AICAR from PRFAR using the ammonia provided by the HisH subunit. The polypeptide is Imidazole glycerol phosphate synthase subunit HisF (Bifidobacterium longum (strain DJO10A)).